The chain runs to 670 residues: Carnitine O-acetyltransferase, mitochondrial (670 aa).

The active-site Proton acceptor is His-378. CoA is bound by residues Lys-461 and 465–472 (KRHGMSPD). Residue Tyr-494 participates in (R)-carnitine binding. Ser-498 provides a ligand contact to CoA. Residue Thr-507 participates in (R)-carnitine binding. CoA is bound at residue Gln-597. Positions 668–670 (AKL) match the Microbody targeting signal motif.

It belongs to the carnitine/choline acetyltransferase family.

The protein resides in the mitochondrion inner membrane. It localises to the peroxisome. It catalyses the reaction (R)-carnitine + acetyl-CoA = O-acetyl-(R)-carnitine + CoA. Carnitine acetylase is specific for short chain fatty acids. Carnitine acetylase seems to affect the flux through the pyruvate dehydrogenase complex. It may be involved as well in the transport of acetyl-CoA into mitochondria. In Saccharomyces cerevisiae (strain ATCC 204508 / S288c) (Baker's yeast), this protein is Carnitine O-acetyltransferase, mitochondrial (CAT2).